The following is a 396-amino-acid chain: Ribosomal RNA large subunit methyltransferase I (396 aa).

One can recognise a PUA domain in the interval 2 to 81 (SVRLVLAKGR…ESIDIAFFTR (80 aa)).

This sequence belongs to the methyltransferase superfamily. RlmI family.

It is found in the cytoplasm. It carries out the reaction cytidine(1962) in 23S rRNA + S-adenosyl-L-methionine = 5-methylcytidine(1962) in 23S rRNA + S-adenosyl-L-homocysteine + H(+). Its function is as follows. Specifically methylates the cytosine at position 1962 (m5C1962) of 23S rRNA. In Escherichia coli (strain SMS-3-5 / SECEC), this protein is Ribosomal RNA large subunit methyltransferase I.